The chain runs to 352 residues: Strictosidine synthase (352 aa).

Positions 1–31 (MANFSESKSMMAVFFMFFLLLLSSSSSSSSS) are cleaved as a signal peptide. N-linked (GlcNAc...) asparagine glycans are attached at residues N95 and N187.

The protein belongs to the strictosidine synthase family. In terms of assembly, monomer.

It localises to the vacuole. It carries out the reaction 3alpha(S)-strictosidine + H2O = secologanin + tryptamine. Its pathway is alkaloid biosynthesis; 3alpha(S)-strictosidine biosynthesis; 3alpha(S)-strictosidine from secologanin and tryptamine: step 1/1. Catalyzes the stereospecific condensation of tryptamine with secologanin to form strictosidine, the key intermediate of indole alkaloid biosynthesis. The chain is Strictosidine synthase (STR1) from Catharanthus roseus (Madagascar periwinkle).